Consider the following 182-residue polypeptide: Thymidine kinase (182 aa).

Position 8–15 (8–15 (GPMFSGKT)) interacts with ATP. The Proton acceptor role is filled by Glu85. Phe117 contacts substrate. Positions 142 and 145 each coordinate Zn(2+). 161–165 (IIEIG) is a substrate binding site. Zn(2+) is bound by residues Cys174 and Cys177.

Belongs to the thymidine kinase family.

It catalyses the reaction thymidine + ATP = dTMP + ADP + H(+). This is Thymidine kinase (TK) from Amsacta moorei entomopoxvirus (AmEPV).